Consider the following 287-residue polypeptide: Large ribosomal subunit protein uL2 (287 aa).

Positions 221–287 (RGSVMNPCDH…SKRSRGGRDS (67 aa)) are disordered. The span at 258–287 (KTRKRNKPSNRFVLRKRRRTSKRSRGGRDS) shows a compositional bias: basic residues.

Belongs to the universal ribosomal protein uL2 family. As to quaternary structure, part of the 50S ribosomal subunit. Forms a bridge to the 30S subunit in the 70S ribosome.

Its function is as follows. One of the primary rRNA binding proteins. Required for association of the 30S and 50S subunits to form the 70S ribosome, for tRNA binding and peptide bond formation. It has been suggested to have peptidyltransferase activity; this is somewhat controversial. Makes several contacts with the 16S rRNA in the 70S ribosome. The polypeptide is Large ribosomal subunit protein uL2 (Prochlorococcus marinus (strain MIT 9303)).